Here is a 198-residue protein sequence, read N- to C-terminus: MSRLENLTSKIIKDSEEKAKIILDEAKREEEKIMLGQKQEGESIKSKIIEKAYLESKNRKERIISNSHLFVRNRKLEAKQEVIDKVYKEALNKLAKLNKEEYLNFIKDSILALEIYGDEEIILSQDEKYINKETIEEINKELKSKGKKGEIKISDKKRDFRGGFILNKDGIEINNTFEALILSLKDDLEPVIIDTLFS.

This sequence belongs to the V-ATPase E subunit family.

Produces ATP from ADP in the presence of a proton gradient across the membrane. This is V-type ATP synthase subunit E 1 from Clostridium tetani (strain Massachusetts / E88).